Here is a 96-residue protein sequence, read N- to C-terminus: Aspartyl/glutamyl-tRNA(Asn/Gln) amidotransferase subunit C (96 aa).

It belongs to the GatC family. Heterotrimer of A, B and C subunits.

The enzyme catalyses L-glutamyl-tRNA(Gln) + L-glutamine + ATP + H2O = L-glutaminyl-tRNA(Gln) + L-glutamate + ADP + phosphate + H(+). It catalyses the reaction L-aspartyl-tRNA(Asn) + L-glutamine + ATP + H2O = L-asparaginyl-tRNA(Asn) + L-glutamate + ADP + phosphate + 2 H(+). Its function is as follows. Allows the formation of correctly charged Asn-tRNA(Asn) or Gln-tRNA(Gln) through the transamidation of misacylated Asp-tRNA(Asn) or Glu-tRNA(Gln) in organisms which lack either or both of asparaginyl-tRNA or glutaminyl-tRNA synthetases. The reaction takes place in the presence of glutamine and ATP through an activated phospho-Asp-tRNA(Asn) or phospho-Glu-tRNA(Gln). The polypeptide is Aspartyl/glutamyl-tRNA(Asn/Gln) amidotransferase subunit C (Exiguobacterium sibiricum (strain DSM 17290 / CCUG 55495 / CIP 109462 / JCM 13490 / 255-15)).